The following is a 433-amino-acid chain: MVNVVLGSQWGDEGKGKLVDLLVSKYDIVARSAGGNNAGHTIVVGGIKYDFHMLPSGLVNPNCQNLIGNGVVIHVPSFFGELEQLEAKGLRDARGRLFISSRAHLVFDFHQRTDKLRELELSGKSKDGKNIGTTGKGIGPTYSTKASRSGLRVHHLVSEQPEAWAEFETKYRRLLETRQQRYGPFEHDAEEELARYRRYREELRPFVVDSVVFMHNAIQQKKKILVEGANALMLDIDFGTYPYVTSSSTGIGGVLTGLGIPPRCIDEIYGVVKAYTTRVGEGPFPTEQLNEAGDKLQTIGAEYGVTTGRKRRCGWLDLVVLKYSTLINGFTSLNITKLDVLDTFKEIKVGISYSLNGKKLDLFPEDLLVLSKVDVEYVTLPGWDEDITKISRYEDLPENAKSYLKFIEDFVGVPVEWVGTGPGRESMLHKEVS.

Residues 11–17 (GDEGKGK) and 39–41 (GHT) contribute to the GTP site. Asp12 acts as the Proton acceptor in catalysis. 2 residues coordinate Mg(2+): Asp12 and Gly39. Residues 12 to 15 (DEGK), 37 to 40 (NAGH), Thr134, Arg148, Asn230, Thr245, and Arg309 contribute to the IMP site. Residue His40 is the Proton donor of the active site. A substrate-binding site is contributed by 305-311 (VTTGRKR). GTP contacts are provided by residues Arg311, 337–339 (KLD), and 419–421 (GTG).

Belongs to the adenylosuccinate synthetase family. Homodimer. Mg(2+) is required as a cofactor.

The protein localises to the cytoplasm. It carries out the reaction IMP + L-aspartate + GTP = N(6)-(1,2-dicarboxyethyl)-AMP + GDP + phosphate + 2 H(+). The protein operates within purine metabolism; AMP biosynthesis via de novo pathway; AMP from IMP: step 1/2. Functionally, plays an important role in the de novo pathway and in the salvage pathway of purine nucleotide biosynthesis. Catalyzes the first committed step in the biosynthesis of AMP from IMP. The sequence is that of Adenylosuccinate synthetase from Eremothecium gossypii (strain ATCC 10895 / CBS 109.51 / FGSC 9923 / NRRL Y-1056) (Yeast).